Consider the following 84-residue polypeptide: Anthracycline acyl carrier protein DauA (84 aa).

The region spanning 3–80 (ELSLAELREI…SMLIFVNERL (78 aa)) is the Carrier domain. At Ser-40 the chain carries O-(pantetheine 4'-phosphoryl)serine.

Its pathway is antibiotic biosynthesis; daunorubicin biosynthesis. It functions in the pathway antibiotic biosynthesis; carminomycin biosynthesis. The protein operates within antibiotic biosynthesis; rhodomycin biosynthesis. It participates in antibiotic biosynthesis; aclacinomycin biosynthesis. In terms of biological role, involved in the biosynthesis of aklanonate which is an important precursor common to the formation of the clinically significant anthracyclines such as carminomycin, daunorubicin (daunomycin), rhodomycin, aclacinomycin T (aklavin) and aclacinomycin A (aclarubicin). These compounds are aromatic polyketide antibiotics that exhibit high cytotoxicity and are widely applied in the chemotherapy of a variety of cancers. The polypeptide is Anthracycline acyl carrier protein DauA (dauA) (Streptomyces sp. (strain C5)).